The following is a 232-amino-acid chain: Phosphatidylserine decarboxylase proenzyme (232 aa).

Catalysis depends on Ser190, which acts as the Schiff-base intermediate with substrate; via pyruvic acid. Ser190 carries the post-translational modification Pyruvic acid (Ser); by autocatalysis.

Belongs to the phosphatidylserine decarboxylase family. PSD-A subfamily. In terms of assembly, heterodimer of a large membrane-associated beta subunit and a small pyruvoyl-containing alpha subunit. Pyruvate is required as a cofactor. Is synthesized initially as an inactive proenzyme. Formation of the active enzyme involves a self-maturation process in which the active site pyruvoyl group is generated from an internal serine residue via an autocatalytic post-translational modification. Two non-identical subunits are generated from the proenzyme in this reaction, and the pyruvate is formed at the N-terminus of the alpha chain, which is derived from the carboxyl end of the proenzyme. The post-translation cleavage follows an unusual pathway, termed non-hydrolytic serinolysis, in which the side chain hydroxyl group of the serine supplies its oxygen atom to form the C-terminus of the beta chain, while the remainder of the serine residue undergoes an oxidative deamination to produce ammonia and the pyruvoyl prosthetic group on the alpha chain.

The protein localises to the cell membrane. It carries out the reaction a 1,2-diacyl-sn-glycero-3-phospho-L-serine + H(+) = a 1,2-diacyl-sn-glycero-3-phosphoethanolamine + CO2. It participates in phospholipid metabolism; phosphatidylethanolamine biosynthesis; phosphatidylethanolamine from CDP-diacylglycerol: step 2/2. In terms of biological role, catalyzes the formation of phosphatidylethanolamine (PtdEtn) from phosphatidylserine (PtdSer). The protein is Phosphatidylserine decarboxylase proenzyme of Cereibacter sphaeroides (strain ATCC 17025 / ATH 2.4.3) (Rhodobacter sphaeroides).